A 410-amino-acid polypeptide reads, in one-letter code: Peptidase T (410 aa).

Residue H79 coordinates Zn(2+). D81 is an active-site residue. D142 is a binding site for Zn(2+). The active-site Proton acceptor is E176. Zn(2+) contacts are provided by E177, D199, and H381.

The protein belongs to the peptidase M20B family. Zn(2+) serves as cofactor.

It is found in the cytoplasm. It carries out the reaction Release of the N-terminal residue from a tripeptide.. Functionally, cleaves the N-terminal amino acid of tripeptides. This is Peptidase T from Listeria monocytogenes serotype 4b (strain F2365).